Reading from the N-terminus, the 1157-residue chain is ATP-dependent helicase/deoxyribonuclease subunit B (1157 aa).

In terms of domain architecture, UvrD-like helicase ATP-binding spans 1–299 (MSIRFIIGRA…SHLEKYFFVR (299 aa)). An ATP-binding site is contributed by 8-15 (GRAGAGKT). The UvrD-like helicase C-terminal domain maps to 279–590 (GNTARFKSPA…LVASLERSRN (312 aa)). Cys-792, Cys-1112, Cys-1115, and Cys-1121 together coordinate [4Fe-4S] cluster.

Belongs to the helicase family. AddB/RexB type 1 subfamily. Heterodimer of AddA and AddB. Mg(2+) serves as cofactor. [4Fe-4S] cluster is required as a cofactor.

Functionally, the heterodimer acts as both an ATP-dependent DNA helicase and an ATP-dependent, dual-direction single-stranded exonuclease. Recognizes the chi site generating a DNA molecule suitable for the initiation of homologous recombination. The AddB subunit has 5' -&gt; 3' nuclease activity but not helicase activity. The sequence is that of ATP-dependent helicase/deoxyribonuclease subunit B from Pelotomaculum thermopropionicum (strain DSM 13744 / JCM 10971 / SI).